Consider the following 332-residue polypeptide: Thiamine-binding periplasmic protein (332 aa).

The N-terminal stretch at 1-20 is a signal peptide; it reads MKLLKLTLISTALFSTAALA. Residues Trp202 and 220-223 contribute to the thiamine site; that span reads YSTS.

This sequence belongs to the bacterial solute-binding protein 1 family. As to quaternary structure, the complex is composed of two ATP-binding proteins (ThiQ), two transmembrane proteins (ThiP) and a solute-binding protein (ThiB).

The protein localises to the periplasm. In terms of biological role, part of the ABC transporter complex ThiBPQ involved in thiamine import. The polypeptide is Thiamine-binding periplasmic protein (thiB) (Haemophilus influenzae (strain ATCC 51907 / DSM 11121 / KW20 / Rd)).